The primary structure comprises 557 residues: MAQEPADLASDYQFWLQKLSAWEQASSKETQRDTCLHLSRFQEFLRQMYELLKEMDSDAILERFPSIGQLLAKTCWNPLILAYDESQKIVIWCLCCLMNKAPRTSAESGRNSWIQGLLSHVLSAFRFDMKEVCLFTKSLGYESIDYYPSLLKNMVLSLVSELRGSHLNGLNTQSRMAPERMMSLSQVCVPLVTLPDIEPLVEALLTYHGHEPQEVLSAEFFEAVTEAFLSEKVVLPTSSVVSLWFRHLPSLEKATLHLFEKLFSSKRNCLRRMECCIKESLLPQAACQPAIFRIVDEMFRFVLLETDGAPAVLAALQIFTSCLVEALRKENKQLKFALKTYFPYSAPCLTAALSQQPEAIPQGHRLQPLLHISQLLREAVEDCTDGSHRNPFESWFLFVHFGGWVDLAVEELLLREEAEPPAGLLWLLVFYYSPQDRSQQREQSMVELKVLVNRLLKLLRSGPLSAMDLLEAAESPREDPRPVCGQLVRRLLLSLLFWTPEGHAIVWEAVTHMAHTDAVTHEIVGFLDQTLYRSHHLCVEASRKLARELLKDLQAQV.

In terms of assembly, belongs to the multisubunit FA complex composed of FANCA, FANCB, FANCC, FANCE, FANCF, FANCG, FANCL/PHF9 and FANCM. This complex may also include HSP70. Interacts with ZBTB32. Upon IFNG induction, interacts with STAT1. Interacts with CDK1. Interacts with EIF2AK2.

It localises to the nucleus. The protein resides in the cytoplasm. Its function is as follows. DNA repair protein that may operate in a postreplication repair or a cell cycle checkpoint function. May be implicated in interstrand DNA cross-link repair and in the maintenance of normal chromosome stability. Upon IFNG induction, may facilitate STAT1 activation by recruiting STAT1 to IFNGR1. This Rattus norvegicus (Rat) protein is Fanconi anemia group C protein homolog (Fancc).